Reading from the N-terminus, the 197-residue chain is LexA repressor (197 aa).

The H-T-H motif DNA-binding region spans 28-47; sequence VREIARRFRITPRGALLHLI. Active-site for autocatalytic cleavage activity residues include serine 119 and lysine 156.

Belongs to the peptidase S24 family. Homodimer.

The catalysed reaction is Hydrolysis of Ala-|-Gly bond in repressor LexA.. Functionally, represses a number of genes involved in the response to DNA damage (SOS response), including recA and lexA. In the presence of single-stranded DNA, RecA interacts with LexA causing an autocatalytic cleavage which disrupts the DNA-binding part of LexA, leading to derepression of the SOS regulon and eventually DNA repair. This Thermotoga sp. (strain RQ2) protein is LexA repressor.